The primary structure comprises 121 residues: MAPRPLLLLLLLLGGSAARPAPPRARRHSDGTFTSELSRLREGARLQRLLQGLVGKRSEQDAENSMAWTRLSAGLLCPSGSNMPILQAWMPLDGTWSPWLPPGPMVSEPAGAAAEGTLRPR.

The first 18 residues, 1 to 18 (MAPRPLLLLLLLLGGSAA), serve as a signal peptide directing secretion. The propeptide occupies 19–26 (RPAPPRAR). The residue at position 54 (valine 54) is a Valine amide. At serine 58 the chain carries Phosphoserine. The propeptide occupies 58–121 (SEQDAENSMA…AAAEGTLRPR (64 aa)).

The protein belongs to the glucagon family.

The protein resides in the secreted. Hormone involved in different processes, such as regulation of the pH of the duodenal content, food intake and water homeostasis. Exerts its biological effects by binding to secretin receptor (SCTR), a G-protein coupled receptor expressed in the basolateral domain of several cells. Acts as a key gastrointestinal hormone by regulating the pH of the duodenal content. Secreted by S cells of the duodenum in the crypts of Lieberkuehn and regulates the pH of the duodenum by (1) inhibiting the secretion of gastric acid from the parietal cells of the stomach and (2) stimulating the production of bicarbonate (NaHCO(3)) from the ductal cells of the pancreas. Production of bicarbonate is essential to neutralize the pH and ensure no damage is done to the small intestine by the gastric acid. In addition to regulating the pH of the duodenal content, plays a central role in diet induced thermogenesis: acts as a non-sympathetic brown fat (BAT) activator mediating prandial thermogenesis, which consequentially induces satiation. Mechanistically, secretin released by the gut after a meal binds to secretin receptor (SCTR) in brown adipocytes, activating brown fat thermogenesis by stimulating lipolysis, which is sensed in the brain and promotes satiation. Also able to stimulate lipolysis in white adipocytes. Also plays an important role in cellular osmoregulation: released into the systemic circulation in response to hyperosmolality and acts at different levels in the hypothalamus, pituitary and kidney to regulate water homeostasis. Also plays a role in the central nervous system, possibly by acting as a neuropeptide hormone: required for hippocampal synaptic function and neural progenitor cells maintenance. The polypeptide is Secretin (Homo sapiens (Human)).